The chain runs to 93 residues: Phosphoribosyl-ATP pyrophosphatase (93 aa).

The protein belongs to the PRA-PH family.

The protein resides in the cytoplasm. It catalyses the reaction 1-(5-phospho-beta-D-ribosyl)-ATP + H2O = 1-(5-phospho-beta-D-ribosyl)-5'-AMP + diphosphate + H(+). It functions in the pathway amino-acid biosynthesis; L-histidine biosynthesis; L-histidine from 5-phospho-alpha-D-ribose 1-diphosphate: step 2/9. This Rhodococcus jostii (strain RHA1) protein is Phosphoribosyl-ATP pyrophosphatase.